Here is a 521-residue protein sequence, read N- to C-terminus: GMP synthase [glutamine-hydrolyzing] (521 aa).

The Glutamine amidotransferase type-1 domain occupies 5–197 (KILILDFGSQ…VLDICGAQPG (193 aa)). The active-site Nucleophile is cysteine 81. Active-site residues include histidine 171 and glutamate 173. The GMPS ATP-PPase domain maps to 198–390 (WTMPNYIEEA…LGLPREMVYR (193 aa)). An ATP-binding site is contributed by 225-231 (SGGVDSS).

In terms of assembly, homodimer.

It catalyses the reaction XMP + L-glutamine + ATP + H2O = GMP + L-glutamate + AMP + diphosphate + 2 H(+). It functions in the pathway purine metabolism; GMP biosynthesis; GMP from XMP (L-Gln route): step 1/1. Catalyzes the synthesis of GMP from XMP. The sequence is that of GMP synthase [glutamine-hydrolyzing] (guaA) from Neisseria meningitidis serogroup B (strain ATCC BAA-335 / MC58).